Here is a 744-residue protein sequence, read N- to C-terminus: FHF complex subunit HOOK-interacting protein 2B (744 aa).

2 disordered regions span residues 184 to 213 and 510 to 530; these read KTARESTAPPKDIAGYRDKDCPHSDALNRD and LDSGLQPSTKPPPAPATSSDG. Over residues 197–213 the composition is skewed to basic and acidic residues; that stretch reads AGYRDKDCPHSDALNRD.

Belongs to the FHIP family. As to expression, expressed in colon.

In terms of biological role, able to activate MAPK/ERK and TGFB signaling pathways. May regulate the activity of genes involved in intestinal barrier function and immunoprotective inflammation. May play a role in cell proliferation. This chain is FHF complex subunit HOOK-interacting protein 2B, found in Mus musculus (Mouse).